We begin with the raw amino-acid sequence, 638 residues long: Influenza virus NS1A-binding protein homolog (638 aa).

The BTB domain occupies 32 to 99 (CDVKLQVCGH…AYTSQLKAET (68 aa)). Residues 134 to 233 (GISCRNFVNT…YYSADHKLLD (100 aa)) form the BACK domain. Residues 251–273 (IQKKSPRENNHKNLISSSSGSLS) form a disordered region. Kelch repeat units lie at residues 365-411 (KLIA…VLMD), 412-459 (HLYV…ALNG), 461-508 (LYVV…ELGN), 509-555 (KIYI…VYDG), 557-602 (LLVV…AVGN), and 604-638 (IYAA…LCES).

The protein localises to the cytoplasm. It localises to the cytoskeleton. The protein resides in the nucleus. Plays a role in cell division and in the dynamic organization of the actin skeleton as a stabilizer of actin filaments by association with F-actin through Kelch repeats. This chain is Influenza virus NS1A-binding protein homolog (ivns1abp), found in Xenopus laevis (African clawed frog).